The sequence spans 946 residues: Villin-4 (946 aa).

Gelsolin-like repeat units follow at residues asparagine 28–lysine 109, valine 152–lysine 219, leucine 274–phenylalanine 339, and glutamate 641–phenylalanine 715. 3 disordered regions span residues alanine 744–proline 789, proline 801–glutamine 832, and glycine 844–aspartate 902. Positions glutamine 765–histidine 777 are enriched in polar residues. Over residues serine 874–asparagine 883 the composition is skewed to acidic residues. Positions aspartate 881–phenylalanine 946 constitute an HP domain.

The protein belongs to the villin/gelsolin family.

It is found in the cytoplasm. The protein resides in the cytoskeleton. Its function is as follows. Ca(2+)-regulated actin-binding protein. Binds actin microfilaments (MFs). Involved in actin filament bundling, severing and capping. Caps the barbed end of actin filaments and is able to sever them in a calcium-dependent manner. The chain is Villin-4 from Oryza sativa subsp. japonica (Rice).